The following is a 430-amino-acid chain: Pre-B-cell leukemia transcription factor 2 (430 aa).

The disordered stretch occupies residues 1–52 (MDERLLGPPPPGGGRGGLGLVGAEPGGPGEPPGGGDPGGGSGGVPGGRGKQD). A compositionally biased stretch (gly residues) spans 13–48 (GGRGGLGLVGAEPGGPGEPPGGGDPGGGSGGVPGGR). One can recognise a PBC domain in the interval 48–243 (RGKQDIGDIL…VMILRSRFLD (196 aa)). The tract at residues 55–134 (DILQQIMTIT…EGVAGPEKGG (80 aa)) is PBC-A. Ser136, Ser151, and Ser159 each carry phosphoserine. Positions 137–243 (AAAAAAAAAS…VMILRSRFLD (107 aa)) are PBC-B. A DNA-binding region (homeobox; TALE-type) is located at residues 244–306 (ARRKRRNFSK…NKRIRYKKNI (63 aa)). Disordered stretches follow at residues 327 to 347 (GGHS…GGSF) and 375 to 430 (LRHS…DTSN). 2 positions are modified to phosphoserine: Ser330 and Ser395. Residues 409 to 418 (VTPSSVTSPT) are compositionally biased toward polar residues.

This sequence belongs to the TALE/PBX homeobox family. As to quaternary structure, forms heterodimers with MEIS1 and heterotrimers with MEIS1 and HOXA9. Interacts with PBXIP1.

The protein resides in the nucleus. Transcriptional activator that binds the sequence 5'-ATCAATCAA-3'. Activates transcription of PF4 in complex with MEIS1. The sequence is that of Pre-B-cell leukemia transcription factor 2 (Pbx2) from Mus musculus (Mouse).